Consider the following 124-residue polypeptide: Mini zinc finger protein 4 (124 aa).

The segment at 35 to 84 adopts a ZF-HD dimerization-type; degenerate zinc-finger fold; it reads YGECRRNHAARMGGHAVDGCREFLAEGEEGTGGALRCAACGCHRSFHRRV.

As to quaternary structure, homo- and heterodimers.

The protein resides in the cytoplasm. Inhibits zinc finger homeodomain (ZHD) transcription factors, by interacting with them to prevent both their nuclear localization and their DNA-binding properties. This is Mini zinc finger protein 4 (MIF4) from Oryza sativa subsp. japonica (Rice).